Consider the following 111-residue polypeptide: Large ribosomal subunit protein uL22 (111 aa).

It belongs to the universal ribosomal protein uL22 family. As to quaternary structure, part of the 50S ribosomal subunit.

Functionally, this protein binds specifically to 23S rRNA; its binding is stimulated by other ribosomal proteins, e.g. L4, L17, and L20. It is important during the early stages of 50S assembly. It makes multiple contacts with different domains of the 23S rRNA in the assembled 50S subunit and ribosome. In terms of biological role, the globular domain of the protein is located near the polypeptide exit tunnel on the outside of the subunit, while an extended beta-hairpin is found that lines the wall of the exit tunnel in the center of the 70S ribosome. The sequence is that of Large ribosomal subunit protein uL22 from Francisella philomiragia subsp. philomiragia (strain ATCC 25017 / CCUG 19701 / FSC 153 / O#319-036).